The primary structure comprises 225 residues: Viral late gene transcription factor 3 (225 aa).

A zinc finger spans residues 7 to 27 (CSNCKHNGLITESNHEFCIFC).

This sequence belongs to the nucleo-cytoplasmic large DNA viruses (NCLDVs) VLTF-3 family. In terms of assembly, interacts with the late transcription elongation factor H5/VLTF-4. Interacts with the late transcription factors VLTF-1.

Functionally, acts with RNA polymerase to initiate transcription from late gene promoters. The polypeptide is Viral late gene transcription factor 3 (VLTF3) (Fowlpox virus (strain NVSL) (FPV)).